A 61-amino-acid chain; its full sequence is Small ribosomal subunit protein uS14B (61 aa).

Zn(2+) contacts are provided by Cys24, Cys27, Cys40, and Cys43.

Belongs to the universal ribosomal protein uS14 family. Zinc-binding uS14 subfamily. In terms of assembly, part of the 30S ribosomal subunit. Contacts proteins S3 and S10. The cofactor is Zn(2+).

Its function is as follows. Binds 16S rRNA, required for the assembly of 30S particles and may also be responsible for determining the conformation of the 16S rRNA at the A site. The chain is Small ribosomal subunit protein uS14B from Streptomyces avermitilis (strain ATCC 31267 / DSM 46492 / JCM 5070 / NBRC 14893 / NCIMB 12804 / NRRL 8165 / MA-4680).